Consider the following 141-residue polypeptide: Hemoglobin subunit alpha (141 aa).

The Globin domain occupies 1–141; that stretch reads VLSPADKTNV…VSTVLTSKYR (141 aa). Ser-3 is subject to Phosphoserine. Residue Lys-7 is modified to N6-succinyllysine. Residue Thr-8 is modified to Phosphothreonine. Lys-11 carries the N6-succinyllysine modification. An N6-acetyllysine; alternate modification is found at Lys-16. Lys-16 is subject to N6-succinyllysine; alternate. Phosphotyrosine is present on Tyr-24. Ser-35 bears the Phosphoserine mark. Lys-40 is modified (N6-succinyllysine). Ser-49 carries the post-translational modification Phosphoserine. Residue His-58 coordinates O2. His-87 contacts heme b. A Phosphoserine modification is found at Ser-102. A Phosphothreonine modification is found at Thr-108. At Ser-124 the chain carries Phosphoserine. Phosphothreonine is present on residues Thr-134 and Thr-137. Ser-138 is subject to Phosphoserine.

It belongs to the globin family. In terms of assembly, heterotetramer of two alpha chains and two beta chains. In terms of tissue distribution, red blood cells.

Functionally, involved in oxygen transport from the lung to the various peripheral tissues. Hemopressin acts as an antagonist peptide of the cannabinoid receptor CNR1. Hemopressin-binding efficiently blocks cannabinoid receptor CNR1 and subsequent signaling. This chain is Hemoglobin subunit alpha (HBA), found in Odobenus rosmarus divergens (Pacific walrus).